A 205-amino-acid polypeptide reads, in one-letter code: Adenylyl-sulfate kinase (205 aa).

31-38 (GLSGAGKS) contributes to the ATP binding site. The active-site Phosphoserine intermediate is the serine 105.

Belongs to the APS kinase family.

It carries out the reaction adenosine 5'-phosphosulfate + ATP = 3'-phosphoadenylyl sulfate + ADP + H(+). Its pathway is sulfur metabolism; hydrogen sulfide biosynthesis; sulfite from sulfate: step 2/3. Its function is as follows. Catalyzes the synthesis of activated sulfate. The chain is Adenylyl-sulfate kinase from Shewanella denitrificans (strain OS217 / ATCC BAA-1090 / DSM 15013).